The sequence spans 452 residues: Histone acetyltransferase type B subunit 2 (452 aa).

WD repeat units follow at residues 155 to 195 (YEDG…NSKE), 205 to 245 (HHTK…SDGS), 256 to 296 (HHDA…NKAA), 300 to 340 (KESR…TPIS), 344 to 384 (SHCD…DDLS), and 401 to 441 (GHSS…SNDE).

This sequence belongs to the WD repeat RBAP46/RBAP48/MSI1 family. Component of the HAT-B complex composed of at least HAT1 and HAT2. The HAT-B complex binds to histone H4 tail.

Its subcellular location is the cytoplasm. It is found in the nucleus. In terms of biological role, regulatory subunit of the histone acetylase B (HAT-B) complex. The complex acetylates 'Lys-12' of histone H4 which is required for telomeric silencing. The protein is Histone acetyltransferase type B subunit 2 (HAT2) of Yarrowia lipolytica (strain CLIB 122 / E 150) (Yeast).